A 223-amino-acid chain; its full sequence is Sigma non-opioid intracellular receptor 1 (223 aa).

The Lumenal portion of the chain corresponds to M1 to W9. Residues Q2–R8 are targeting to endoplasmic reticulum-associated lipid droplets. The chain crosses the membrane as a helical span at residues V10–L30. At G31–S223 the chain is on the cytoplasmic side. The important for ligand-binding stretch occupies residues S99–L106. The segment at V177 to S223 is C-terminal hydrophobic region.

This sequence belongs to the ERG2 family. In terms of assembly, homotrimer. Forms a ternary complex with ANK2 and ITPR3. The complex is disrupted by agonists. Interacts with KCNA4. Interacts with KCNA2; cocaine consumption leads to increased interaction. Interacts with RNF112 in an oxidative stress-regulated manner.

The protein localises to the nucleus inner membrane. Its subcellular location is the nucleus outer membrane. The protein resides in the nucleus envelope. It localises to the cytoplasmic vesicle. It is found in the endoplasmic reticulum membrane. The protein localises to the membrane. Its subcellular location is the lipid droplet. The protein resides in the cell junction. It localises to the cell membrane. It is found in the cell projection. The protein localises to the growth cone. Its subcellular location is the postsynaptic density membrane. In terms of biological role, functions in lipid transport from the endoplasmic reticulum and is involved in a wide array of cellular functions probably through regulation of the biogenesis of lipid microdomains at the plasma membrane. Involved in the regulation of different receptors it plays a role in BDNF signaling and EGF signaling. Also regulates ion channels like the potassium channel and could modulate neurotransmitter release. Plays a role in calcium signaling through modulation together with ANK2 of the ITP3R-dependent calcium efflux at the endoplasmic reticulum. Plays a role in several other cell functions including proliferation, survival and death. Originally identified for its ability to bind various psychoactive drugs it is involved in learning processes, memory and mood alteration. Necessary for proper mitochondrial axonal transport in motor neurons, in particular the retrograde movement of mitochondria. Plays a role in protecting cells against oxidative stress-induced cell death via its interaction with RNF112. The chain is Sigma non-opioid intracellular receptor 1 (SIGMAR1) from Mustela erminea (Ermine).